Reading from the N-terminus, the 362-residue chain is Cytochrome c oxidase subunit 2 (362 aa).

The first 28 residues, 1-28, serve as a signal peptide directing secretion; sequence MEQQEKRGTVRKALLGSVIGFGGLALAG. The N-palmitoyl cysteine moiety is linked to residue C29. Residue C29 is the site of S-diacylglycerol cysteine attachment. 2 consecutive transmembrane segments (helical) span residues 60–80 and 107–127; these read FWVW…GLFI and IPLE…LFFF. A disordered region spans residues 171-206; sequence SDYVGTDEKRQEAAEKTKFDQGGDNPNPINGRSKTD. Residues 176-191 are compositionally biased toward basic and acidic residues; it reads TDEKRQEAAEKTKFDQ. Residues 197–206 show a composition bias toward polar residues; it reads NPINGRSKTD. Cu cation is bound by residues H246, C287, E289, C291, H295, and M298. Positions 325–362 are disordered; that stretch reads NSDALKSIGEAPYATSTHPFNSERATRDGANFDDTAAA.

It belongs to the cytochrome c oxidase subunit 2 family. In terms of assembly, associates with subunits I, III and IV to form cytochrome c oxidase. Requires binuclear copper center (CuA) as cofactor.

The protein resides in the cell membrane. The catalysed reaction is 4 Fe(II)-[cytochrome c] + O2 + 8 H(+)(in) = 4 Fe(III)-[cytochrome c] + 2 H2O + 4 H(+)(out). In terms of biological role, subunits I and II form the functional core of the enzyme complex. Electrons originating in cytochrome c are transferred via heme a and Cu(A) to the binuclear center formed by heme a3 and Cu(B). This is Cytochrome c oxidase subunit 2 (ctaC) from Corynebacterium diphtheriae (strain ATCC 700971 / NCTC 13129 / Biotype gravis).